The sequence spans 108 residues: Evasin P1156 (108 aa).

The first 28 residues, 1 to 28, serve as a signal peptide directing secretion; it reads MEVKTYAFLQIAVFIFLGMQIFASLTDA. 3 disulfide bridges follow: Cys41–Cys63, Cys45–Cys65, and Cys56–Cys76. A glycan (N-linked (GlcNAc...) asparagine) is linked at Asn44. The segment at 89–108 is disordered; the sequence is NPSDSEIEAAKPKRSDTLSH. Residues 96-108 show a composition bias toward basic and acidic residues; the sequence is EAAKPKRSDTLSH.

It is found in the secreted. In terms of biological role, salivary chemokine-binding protein which has chemokine-neutralizing activity and binds to host chemokines CXCL1, CXCL2, CXCL3, CXCL5, CXCL6 and CXCL8. This Ixodes ricinus (Common tick) protein is Evasin P1156.